The sequence spans 576 residues: RING finger and SPRY domain-containing protein 1 (576 aa).

The N-terminal stretch at 1–16 (MIVLGWAVFLASRSLG) is a signal peptide. Position 50 is a phosphoserine (serine 50). The interval 50–99 (SGTDDSVDTQQQQAENSAVPTADTRSQPRDPVRPPRRGRGPHEPRRKKQN) is disordered. Over residues 57 to 68 (DTQQQQAENSAV) the composition is skewed to polar residues. Residues 83-97 (PPRRGRGPHEPRRKK) show a composition bias toward basic residues. The region spanning 300–483 (LFLKEGRQLT…CEFNFGAKPF (184 aa)) is the B30.2/SPRY domain. Asparagine 314 is a glycosylation site (N-linked (GlcNAc...) asparagine). An RING-type zinc finger spans residues 527–562 (CSLCCDEVADTQLKPCGHSDLCMDCALQLETCPLCR).

It localises to the secreted. In Macaca fascicularis (Crab-eating macaque), this protein is RING finger and SPRY domain-containing protein 1 (RSPRY1).